Here is a 1985-residue protein sequence, read N- to C-terminus: Treslin (1985 aa).

Disordered regions lie at residues 574–609 (AQKA…LKPT), 791–858 (EEKS…QPNK), 894–974 (IQET…SIVE), 999–1033 (RRNS…RPGS), 1072–1156 (VYKT…LWGR), 1184–1243 (VKTP…PSGY), 1849–1875 (HEDS…QSRS), and 1938–1966 (FSDG…SPFR). Residues 823–837 (RSAKKRRSTALARHR) show a composition bias toward basic residues. A compositionally biased stretch (low complexity) spans 964–974 (SESNSNISIVE). Polar residues-rich tracts occupy residues 999–1026 (RRNS…QLQQ) and 1085–1097 (SKNI…QSGN). Positions 1105-1114 (TPYTPRTPSR) are enriched in low complexity. 2 stretches are compositionally biased toward basic and acidic residues: residues 1144–1156 (KPEE…LWGR) and 1191–1200 (QRLESKDFRT). Positions 1201–1224 (PSRTPTRSNNTTPAKQSMQISNTP) are enriched in polar residues. Positions 1225 to 1238 (RKSDLKHPQEHESR) are enriched in basic and acidic residues.

This sequence belongs to the treslin family. Interacts with topbp1 (via BRCT domains); interaction is cdk2-dependent. Component of the replisome complex. In terms of processing, phosphorylated during interphase. Cdk2 promotes both phosphorylation and formation of a ticrr-topbp1 complex.

It localises to the nucleus. Regulator of DNA replication and S/M and G2/M checkpoints. Regulates the triggering of DNA replication initiation via its interaction with topbp1 by participating in cdk2-mediated loading of cdc45l onto replication origins. Required for the transition from pre-replication complex (pre-RC) to pre-initiation complex (pre-IC). Required to prevent mitotic entry after treatment with ionizing radiation. The protein is Treslin (ticrr) of Xenopus laevis (African clawed frog).